A 523-amino-acid chain; its full sequence is Histidine ammonia-lyase (523 aa).

Residues 148 to 150 (ASG) constitute a cross-link (5-imidazolinone (Ala-Gly)). A 2,3-didehydroalanine (Ser) modification is found at Ser-149.

The protein belongs to the PAL/histidase family. Post-translationally, contains an active site 4-methylidene-imidazol-5-one (MIO), which is formed autocatalytically by cyclization and dehydration of residues Ala-Ser-Gly.

Its subcellular location is the cytoplasm. The catalysed reaction is L-histidine = trans-urocanate + NH4(+). It functions in the pathway amino-acid degradation; L-histidine degradation into L-glutamate; N-formimidoyl-L-glutamate from L-histidine: step 1/3. This Chloroflexus aurantiacus (strain ATCC 29366 / DSM 635 / J-10-fl) protein is Histidine ammonia-lyase.